We begin with the raw amino-acid sequence, 443 residues long: Xaa-Pro dipeptidase (443 aa).

5 residues coordinate Mn(2+): aspartate 244, aspartate 255, histidine 339, glutamate 384, and glutamate 423.

Belongs to the peptidase M24B family. Bacterial-type prolidase subfamily. Mn(2+) is required as a cofactor.

The enzyme catalyses Xaa-L-Pro dipeptide + H2O = an L-alpha-amino acid + L-proline. In terms of biological role, splits dipeptides with a prolyl residue in the C-terminal position. The protein is Xaa-Pro dipeptidase of Pseudoalteromonas atlantica (strain T6c / ATCC BAA-1087).